The chain runs to 221 residues: Endonuclease V (221 aa).

Residues D44 and D112 each contribute to the Mg(2+) site.

This sequence belongs to the endonuclease V family. The cofactor is Mg(2+).

Its subcellular location is the cytoplasm. It catalyses the reaction Endonucleolytic cleavage at apurinic or apyrimidinic sites to products with a 5'-phosphate.. In terms of biological role, DNA repair enzyme involved in the repair of deaminated bases. Selectively cleaves double-stranded DNA at the second phosphodiester bond 3' to a deoxyinosine leaving behind the intact lesion on the nicked DNA. This Nostoc sp. (strain PCC 7120 / SAG 25.82 / UTEX 2576) protein is Endonuclease V.